The chain runs to 161 residues: Myosin regulatory light chain A, smooth adductor muscle (161 aa).

A1 is modified (blocked amino end (Ala)). EF-hand domains lie at 20–55 and 89–124; these read KLMQ…LGRT and DTEE…MGDN. Residues D33, N35, D37, and D44 each coordinate Ca(2+).

In molluscan muscle, calcium regulation is associated with myosin rather than with actin. Muscle myosin contains two types of light chains: the catalytic light chain, essential for ATPase activity, and the regulatory light chain, a calcium-binding protein responsible for Ca(2+) dependent binding and Ca(2+) dependent Mg-ATPase activity. The polypeptide is Myosin regulatory light chain A, smooth adductor muscle (Mizuhopecten yessoensis (Japanese scallop)).